A 355-amino-acid polypeptide reads, in one-letter code: Zinc finger A20 and AN1 domain-containing stress-associated protein 3 (355 aa).

The A20-type zinc-finger motif lies at 199–233 (AGQPVLCASGCGFYGNPATLDMCSVCYRQHCLLNG). The Zn(2+) site is built by Cys205, Cys209, Cys221, Cys224, Cys295, Cys298, Cys309, Cys311, Cys316, His319, His325, and Cys327. The AN1-type zinc finger occupies 289-335 (KAPANRCASCKKKVGLLGFACRCGATYCGTHRYPEKHACGFDFKGAS).

Its function is as follows. May be involved in environmental stress response. In Oryza sativa subsp. japonica (Rice), this protein is Zinc finger A20 and AN1 domain-containing stress-associated protein 3 (SAP3).